We begin with the raw amino-acid sequence, 404 residues long: Cysteine desulfurase IscS (404 aa).

Pyridoxal 5'-phosphate is bound by residues 75–76, Asn-155, Gln-183, and 203–205; these read AT and SGH. Lys-206 is subject to N6-(pyridoxal phosphate)lysine. Thr-243 serves as a coordination point for pyridoxal 5'-phosphate. Cys-328 serves as the catalytic Cysteine persulfide intermediate. Cys-328 lines the [2Fe-2S] cluster pocket.

This sequence belongs to the class-V pyridoxal-phosphate-dependent aminotransferase family. NifS/IscS subfamily. Homodimer. Forms a heterotetramer with IscU, interacts with other sulfur acceptors. Requires pyridoxal 5'-phosphate as cofactor.

It localises to the cytoplasm. It catalyses the reaction (sulfur carrier)-H + L-cysteine = (sulfur carrier)-SH + L-alanine. It participates in cofactor biosynthesis; iron-sulfur cluster biosynthesis. In terms of biological role, master enzyme that delivers sulfur to a number of partners involved in Fe-S cluster assembly, tRNA modification or cofactor biosynthesis. Catalyzes the removal of elemental sulfur atoms from cysteine to produce alanine. Functions as a sulfur delivery protein for Fe-S cluster synthesis onto IscU, an Fe-S scaffold assembly protein, as well as other S acceptor proteins. This is Cysteine desulfurase IscS from Shewanella denitrificans (strain OS217 / ATCC BAA-1090 / DSM 15013).